The sequence spans 296 residues: Nucleotide-binding protein Pnec_1620 (296 aa).

8–15 lines the ATP pocket; sequence GISGSGKS. Residue 57–60 participates in GTP binding; that stretch reads DARR.

Belongs to the RapZ-like family.

Its function is as follows. Displays ATPase and GTPase activities. The polypeptide is Nucleotide-binding protein Pnec_1620 (Polynucleobacter necessarius subsp. necessarius (strain STIR1)).